Here is a 450-residue protein sequence, read N- to C-terminus: tRNA modification GTPase MnmE (450 aa).

(6S)-5-formyl-5,6,7,8-tetrahydrofolate is bound by residues arginine 25, glutamate 86, and arginine 126. The TrmE-type G domain occupies 221–373 (GLRVALVGRP…LVQALLERCG (153 aa)). Asparagine 231 serves as a coordination point for K(+). GTP contacts are provided by residues 231 to 236 (NVGKSS), 250 to 256 (TDLPGTT), 275 to 278 (DTAG), and 336 to 339 (NKAD). Serine 235 is a binding site for Mg(2+). Threonine 250, leucine 252, and threonine 255 together coordinate K(+). Threonine 256 lines the Mg(2+) pocket. Lysine 450 serves as a coordination point for (6S)-5-formyl-5,6,7,8-tetrahydrofolate.

This sequence belongs to the TRAFAC class TrmE-Era-EngA-EngB-Septin-like GTPase superfamily. TrmE GTPase family. In terms of assembly, homodimer. Heterotetramer of two MnmE and two MnmG subunits. K(+) is required as a cofactor.

It is found in the cytoplasm. In terms of biological role, exhibits a very high intrinsic GTPase hydrolysis rate. Involved in the addition of a carboxymethylaminomethyl (cmnm) group at the wobble position (U34) of certain tRNAs, forming tRNA-cmnm(5)s(2)U34. The chain is tRNA modification GTPase MnmE from Synechococcus sp. (strain CC9605).